We begin with the raw amino-acid sequence, 303 residues long: Recombination-associated protein RdgC (303 aa).

It belongs to the RdgC family.

It localises to the cytoplasm. It is found in the nucleoid. May be involved in recombination. This chain is Recombination-associated protein RdgC, found in Yersinia enterocolitica serotype O:8 / biotype 1B (strain NCTC 13174 / 8081).